The chain runs to 161 residues: UPF0506 protein SJCHGC02965 (161 aa).

Residues glutamine 1–serine 13 form the signal peptide. Asparagine 15, asparagine 19, asparagine 31, asparagine 43, asparagine 47, asparagine 59, asparagine 63, asparagine 75, and asparagine 121 each carry an N-linked (GlcNAc...) asparagine glycan. 3 cysteine pairs are disulfide-bonded: cysteine 127–cysteine 141, cysteine 134–cysteine 145, and cysteine 140–cysteine 150.

This sequence belongs to the UPF0506 family.

Its subcellular location is the secreted. The protein is UPF0506 protein SJCHGC02965 of Schistosoma japonicum (Blood fluke).